A 301-amino-acid chain; its full sequence is Probable alpha-L-glutamate ligase (301 aa).

Positions 104–287 (MQLLSRKGIG…VAGLIIDFIE (184 aa)) constitute an ATP-grasp domain. ATP contacts are provided by residues K141, 178–179 (EF), D187, and 211–213 (RSN). Positions 248, 260, and 262 each coordinate Mg(2+). Residues D248, E260, and N262 each coordinate Mn(2+).

This sequence belongs to the RimK family. Mg(2+) serves as cofactor. Mn(2+) is required as a cofactor.

The protein is Probable alpha-L-glutamate ligase of Aliivibrio fischeri (strain MJ11) (Vibrio fischeri).